We begin with the raw amino-acid sequence, 422 residues long: Serine--tRNA ligase (422 aa).

The disordered stretch occupies residues 1–20; the sequence is MHDLKSIRDNPDGFDAGLKR. Position 229–231 (229–231) interacts with L-serine; sequence TAE. 260-262 contacts ATP; the sequence is RSE. Residue E283 participates in L-serine binding. 347–350 serves as a coordination point for ATP; sequence EISS. An L-serine-binding site is contributed by S383.

This sequence belongs to the class-II aminoacyl-tRNA synthetase family. Type-1 seryl-tRNA synthetase subfamily. Homodimer. The tRNA molecule binds across the dimer.

The protein localises to the cytoplasm. It catalyses the reaction tRNA(Ser) + L-serine + ATP = L-seryl-tRNA(Ser) + AMP + diphosphate + H(+). The catalysed reaction is tRNA(Sec) + L-serine + ATP = L-seryl-tRNA(Sec) + AMP + diphosphate + H(+). Its pathway is aminoacyl-tRNA biosynthesis; selenocysteinyl-tRNA(Sec) biosynthesis; L-seryl-tRNA(Sec) from L-serine and tRNA(Sec): step 1/1. Its function is as follows. Catalyzes the attachment of serine to tRNA(Ser). Is also able to aminoacylate tRNA(Sec) with serine, to form the misacylated tRNA L-seryl-tRNA(Sec), which will be further converted into selenocysteinyl-tRNA(Sec). The protein is Serine--tRNA ligase of Paramagnetospirillum magneticum (strain ATCC 700264 / AMB-1) (Magnetospirillum magneticum).